The following is a 477-amino-acid chain: Exodeoxyribonuclease 7 large subunit (477 aa).

The segment at 452-477 is disordered; it reads KAAAAPKRVKKSPPPGTSGAQEDLFG.

This sequence belongs to the XseA family. Heterooligomer composed of large and small subunits.

The protein resides in the cytoplasm. It catalyses the reaction Exonucleolytic cleavage in either 5'- to 3'- or 3'- to 5'-direction to yield nucleoside 5'-phosphates.. In terms of biological role, bidirectionally degrades single-stranded DNA into large acid-insoluble oligonucleotides, which are then degraded further into small acid-soluble oligonucleotides. In Erythrobacter litoralis (strain HTCC2594), this protein is Exodeoxyribonuclease 7 large subunit.